Here is a 562-residue protein sequence, read N- to C-terminus: MENQKMPISSVSNLKDLNMISRPVANFPPSIWGDRFINYACEDENDQAQKEKQVEELKELVRRELAITVDKPLQQLNIIDATQRLGIAYLFENEIEESLEHIYLHTYVENTCFEGSDDLYSVALWFRLLRQNDYRVSCDVFNKFRDNEGNFKNNLMEDTKGLLELYEATHLSVHGEEMLDDALEFTKTRLESVVSHLNYPLAEQVRHALYQPLHKGLPRLEAVYFFRIYEAHASHNKALLKLAKLDFNLLQSFHKKELSDIARWWKSLDFAAKFPFARDRLVEGYFWVLGVYFEPQYSLARKIIIKVFTMISTIDDIYDAYGTLDELELFTKAMQRWDVGSLDQLPEYMKPCYKSILDVYNEIEVEMDNQGSLFRMHYAKEVMKKLVEGYMDEAKWCHEKYVPTFQEYMSVALVTSGYTFLTTISYLGMGEIASKEAFDWLFSHPPVIEASESVGRLMDDTRSHKFEQERGHVASGIECYMKQYGVTEEEARDEFRKRLVKAWKDINEECLRPYRVPKPLLMRILNLTRVIDVIYKNEDGYTHVKKAMKDNIASLLIDPMIV.

Mg(2+)-binding residues include Asp315, Asp319, and Glu467. A DDXXD motif motif is present at residues 315–319; the sequence is DDIYD.

Belongs to the terpene synthase family. Tpsa subfamily. Mg(2+) serves as cofactor. It depends on Mn(2+) as a cofactor.

Functionally, sesquiterpene synthase. The polypeptide is Probable sesquiterpene synthase (SesquiTPS) (Santalum austrocaledonicum (Sandalwood)).